A 200-amino-acid polypeptide reads, in one-letter code: Small ribosomal subunit protein uS4 (200 aa).

Residues 22 to 42 (TGKELEKRPYAPGPHGPGQRK) are disordered. The region spanning 92 to 155 (TRLDNLVYRL…QNLAVVKESV (64 aa)) is the S4 RNA-binding domain.

Belongs to the universal ribosomal protein uS4 family. In terms of assembly, part of the 30S ribosomal subunit. Contacts protein S5. The interaction surface between S4 and S5 is involved in control of translational fidelity.

Functionally, one of the primary rRNA binding proteins, it binds directly to 16S rRNA where it nucleates assembly of the body of the 30S subunit. In terms of biological role, with S5 and S12 plays an important role in translational accuracy. This is Small ribosomal subunit protein uS4 from Bacillus pumilus (strain SAFR-032).